The sequence spans 1779 residues: 6-methylsalicylic acid synthase (1779 aa).

Over residues 1–11 (MSASRSSTKFS) the composition is skewed to polar residues. A disordered region spans residues 1 to 40 (MSASRSSTKFSTPAEGSDNGKEFTTPATSTEGHEVPDRPG). The span at 31-40 (EGHEVPDRPG) shows a compositional bias: basic and acidic residues. A Ketosynthase family 3 (KS3) domain is found at 43 to 472 (LADVAIIGMA…GTVSHAVLEA (430 aa)). Catalysis depends on for beta-ketoacyl synthase activity residues C215, H350, and H392. A malonyl-CoA:ACP transacylase (MAT) domain region spans residues 586 to 883 (WIFSGHGAQW…TPTMVRRQPA (298 aa)). The active-site For acyl/malonyl transferase activity is S672. The tract at residues 942–1218 (THDPAANNLL…SFAGLEGESF (277 aa)) is product template (PT) domain. The segment at 948–1064 (NNLLGKRIAL…AAVGAANVVP (117 aa)) is N-terminal hotdog fold. The PKS/mFAS DH domain maps to 948-1219 (NNLLGKRIAL…FAGLEGESFS (272 aa)). The Proton acceptor; for dehydratase activity role is filled by H980. The C-terminal hotdog fold stretch occupies residues 1079–1219 (PQKLADSFSI…FAGLEGESFS (141 aa)). D1138 functions as the Proton donor; for dehydratase activity in the catalytic mechanism. Positions 1703 to 1777 (QHLRDVINGC…HLVKHFTKEL (75 aa)) constitute a Carrier domain. S1737 bears the O-(pantetheine 4'-phosphoryl)serine mark.

It carries out the reaction 3 malonyl-CoA + acetyl-CoA + NADPH + 3 H(+) = 6-methylsalicylate + 3 CO2 + NADP(+) + 4 CoA + H2O. The protein operates within secondary metabolite biosynthesis; terpenoid biosynthesis. Functionally, non-reducing polyketide synthase; part of the gene cluster that mediates the biosynthesis of yanuthone D, a fungal isoprenoid epoxycyclohexenone that acts as an antibiotic against fungi and bacteria. The first step of the pathway is the synthesis of 6-methylsalicylic acid (6-MSA) by the polyketide synthase yanA. 6-MSA is then converted to m-cresol by the decarboxylase yanB. The cytochrome P450 monooxygenase yanC then catalyzes the oxidation of m-cresol to toluquinol. Epoxidation of toluquinol is then performed by the short chain dehydrogenase yanD, with the help of yanE, and a further prenylation by yanG leads to 7-deacetoxyyanuthone A. The next step is the hydroxylation of C-22 of 7-deacetoxyyanuthone A by the cytochrome P450 monooxygenase yanH to yield 22-deacetylyanuthone A. O-Mevalon transferase yanI then attaches mevalon to the hydroxyl group of 22-deacetylyanuthone A to produce yanuthone E. Finally, the FAD-dependent monooxygenase yanF oxidizes the hydroxyl group at C15 of yanuthone E to form yanuthone D. Furthermore, several branching points in the pathway lead to the production of yanuthones F and G from 7-deacetoxyyanuthone A; yanuthones H and I from 22-deacetylyanuthone A; and yanuthone J from yanuthone E. The protein is 6-methylsalicylic acid synthase of Aspergillus niger (strain ATCC 1015 / CBS 113.46 / FGSC A1144 / LSHB Ac4 / NCTC 3858a / NRRL 328 / USDA 3528.7).